The chain runs to 624 residues: Leucine-rich repeat and IQ domain-containing protein 3 (624 aa).

3 LRR repeats span residues 51 to 72, 73 to 94, and 98 to 119; these read SLRV…QSCI, KLIK…KFWN, and NLKL…CVLS. In terms of domain architecture, LRRCT spans 132-179; the sequence is CPVSLKKGYRHVLVNSIWPLKALDHHVISDEEIIQNWHLPERFKACNH. Positions 215 to 244 constitute an IQ domain; it reads HNSPVLIVQRWIRGFLVRKNLSPVFFHKKK. A coiled-coil region spans residues 553–614; the sequence is KQKLKAEKYR…TKVAIVKTNL (62 aa).

The protein is Leucine-rich repeat and IQ domain-containing protein 3 (LRRIQ3) of Homo sapiens (Human).